The following is a 482-amino-acid chain: tRNA modification GTPase MnmE (482 aa).

(6S)-5-formyl-5,6,7,8-tetrahydrofolate is bound by residues arginine 25, glutamate 82, and lysine 135. Residues 231 to 404 (GIKVVIAGQP…LRRVLLDIAG (174 aa)) enclose the TrmE-type G domain. Asparagine 241 is a K(+) binding site. GTP-binding positions include 241 to 246 (NAGKSS), 260 to 266 (TPIAGTT), 285 to 288 (DTAG), and 385 to 387 (SAR). Serine 245 serves as a coordination point for Mg(2+). Residues threonine 260, isoleucine 262, and threonine 265 each coordinate K(+). Threonine 266 lines the Mg(2+) pocket. Lysine 482 is a (6S)-5-formyl-5,6,7,8-tetrahydrofolate binding site.

This sequence belongs to the TRAFAC class TrmE-Era-EngA-EngB-Septin-like GTPase superfamily. TrmE GTPase family. In terms of assembly, homodimer. Heterotetramer of two MnmE and two MnmG subunits. Requires K(+) as cofactor.

It is found in the cytoplasm. Functionally, exhibits a very high intrinsic GTPase hydrolysis rate. Involved in the addition of a carboxymethylaminomethyl (cmnm) group at the wobble position (U34) of certain tRNAs, forming tRNA-cmnm(5)s(2)U34. The chain is tRNA modification GTPase MnmE from Paracidovorax citrulli (strain AAC00-1) (Acidovorax citrulli).